The primary structure comprises 504 residues: MNIKPEEITSIIRQQIENFNTNIETIDSGTIIQIGDGIARVYGLEDCMEGELIEFPNDVYGMALNLEQDNVGCVLLGAEEGIKEGNVVKRTKKVVEVPVGEALVGRVVNSLGMPIDGKGPVLTTENRDVEVPAPGVIDRQSVKEPLQTGIKAIDSMIPIGKGQRELIIGDRQTGKTAIAMDTILNQKGKDVICIYVAIGQKQSTVAHIVNDLTKMGAMDYTIVVSSTASDSAPLQYLAPYAGCSMGEYFMHKGKDVLIVYDDLSKHAVAYRTMSLLLRRPPGREAYPGDVFYLHSRLLERSARLSEKLGGGSLTALPIVETLAGDVTAYIPTNVISITDGQIFLESELFNAGQRPAVNAGISVSRVGGNAQIKAMKQVAGTLRLELAQYRELAAFSQFGSDLDKESVKRLEKGKRLVEILKQPQYGPMPVEKEIIILYAAVNNHLIDIPVNKIKEFEKELFNYIDTHYRDIGKDILEHKQLTDELKSKLDKAINDFKNVFLSEI.

Position 169–176 (169–176 (GDRQTGKT)) interacts with ATP.

This sequence belongs to the ATPase alpha/beta chains family. In terms of assembly, F-type ATPases have 2 components, CF(1) - the catalytic core - and CF(0) - the membrane proton channel. CF(1) has five subunits: alpha(3), beta(3), gamma(1), delta(1), epsilon(1). CF(0) has three main subunits: a(1), b(2) and c(9-12). The alpha and beta chains form an alternating ring which encloses part of the gamma chain. CF(1) is attached to CF(0) by a central stalk formed by the gamma and epsilon chains, while a peripheral stalk is formed by the delta and b chains.

The protein resides in the cell membrane. The catalysed reaction is ATP + H2O + 4 H(+)(in) = ADP + phosphate + 5 H(+)(out). Functionally, produces ATP from ADP in the presence of a proton gradient across the membrane. The alpha chain is a regulatory subunit. This Clostridium botulinum (strain Langeland / NCTC 10281 / Type F) protein is ATP synthase subunit alpha.